The chain runs to 290 residues: MSAETTASGYIQHHLQNLTFGQLPNGSWGFAHSAAEAKEMGFWAFHVDTLGWSVALGVIFILLFRMAAKKATSGVPGALQNFVEVMVGFVDGSVKDSFHGRSPVIAPLALTIFVWVFLMNAIDLVPVDWIPQLAMLISGDQHIPFRAVSTTDPNATLGMALSVFALIIFYSIKVKGIGGFIGELTLHPFGSKNILVQALLIPVNFLLEFVTLVAKPISLALRLFGNMYAGELVFILIAVMFGSGLLWLSGMGVVLQWAWAVFHILIITLQAFIFMMLTIVYLSMAHEENH.

The next 6 membrane-spanning stretches (helical) occupy residues Ala44–Phe64, Val104–Leu124, Leu161–Ile181, Ile194–Ala214, Val233–Val253, and Ala260–Val280.

Belongs to the ATPase A chain family. In terms of assembly, F-type ATPases have 2 components, CF(1) - the catalytic core - and CF(0) - the membrane proton channel. CF(1) has five subunits: alpha(3), beta(3), gamma(1), delta(1), epsilon(1). CF(0) has three main subunits: a(1), b(2) and c(9-12). The alpha and beta chains form an alternating ring which encloses part of the gamma chain. CF(1) is attached to CF(0) by a central stalk formed by the gamma and epsilon chains, while a peripheral stalk is formed by the delta and b chains.

The protein localises to the cell inner membrane. Its function is as follows. Key component of the proton channel; it plays a direct role in the translocation of protons across the membrane. The polypeptide is ATP synthase subunit a (Pseudomonas fluorescens (strain ATCC BAA-477 / NRRL B-23932 / Pf-5)).